We begin with the raw amino-acid sequence, 256 residues long: Thiazole synthase (256 aa).

The active-site Schiff-base intermediate with DXP is the lysine 95. Residues glycine 156, 182-183, and 204-205 each bind 1-deoxy-D-xylulose 5-phosphate; these read AG and NT.

Belongs to the ThiG family. As to quaternary structure, homotetramer. Forms heterodimers with either ThiH or ThiS.

It localises to the cytoplasm. The catalysed reaction is [ThiS sulfur-carrier protein]-C-terminal-Gly-aminoethanethioate + 2-iminoacetate + 1-deoxy-D-xylulose 5-phosphate = [ThiS sulfur-carrier protein]-C-terminal Gly-Gly + 2-[(2R,5Z)-2-carboxy-4-methylthiazol-5(2H)-ylidene]ethyl phosphate + 2 H2O + H(+). The protein operates within cofactor biosynthesis; thiamine diphosphate biosynthesis. In terms of biological role, catalyzes the rearrangement of 1-deoxy-D-xylulose 5-phosphate (DXP) to produce the thiazole phosphate moiety of thiamine. Sulfur is provided by the thiocarboxylate moiety of the carrier protein ThiS. In vitro, sulfur can be provided by H(2)S. The polypeptide is Thiazole synthase (Escherichia fergusonii (strain ATCC 35469 / DSM 13698 / CCUG 18766 / IAM 14443 / JCM 21226 / LMG 7866 / NBRC 102419 / NCTC 12128 / CDC 0568-73)).